The primary structure comprises 295 residues: Mitochondrial dicarboxylate transporter (295 aa).

Solcar repeat units follow at residues 4-88, 96-188, and 198-286; these read KQVK…LKEH, TNMW…FKNF, and KKNS…LKKY. Transmembrane regions (helical) follow at residues 8–24, 63–82, 98–122, 163–182, 204–224, and 262–280; these read YPWW…VMNT, GLSA…FGMY, MWYL…ADLI, GWKP…VVTY, LTSS…ADVI, and WVPS…FFAM.

It belongs to the mitochondrial carrier (TC 2.A.29) family. In terms of assembly, homodimer.

The protein resides in the mitochondrion inner membrane. Functionally, mitochondrial dicarboxylic transporter catalyzing the exchange of dicarboxylic acids like malate and succinate for inorganic phosphate. Required for growth on ethanol and acetate. The protein is Mitochondrial dicarboxylate transporter (DIC1) of Candida glabrata (strain ATCC 2001 / BCRC 20586 / JCM 3761 / NBRC 0622 / NRRL Y-65 / CBS 138) (Yeast).